The chain runs to 368 residues: MNKKTIVVKFGTSTLTQGSPKLNSPHMMEIVRQIAQLHNDGFRIVIVTSGAIAAGRHYLNHPQLPPTIASKQLLAAVGQSQLIQAWEKLFAIYDIHIGQLLLTRADIEDRERFLNARDTLHALLDNHIIPVINENDAVATAEIKVGDNDNLSALVAILVQAEQLYLLTDQQGLFDSDPRKNSEAKLIPVVEQITDHIRSIAGGSGTNLGTGGMMTKIIAADVATRSGIETIIAPGNRPNVIADLAYEQNIGTKFIAHQSDRLESRKQWLFAAPSAGIITIDNGAQNAILEQNKSLLPAGIINVEGRFSRGEVVKIRTQSGKDIALGMPRYNSDSLQLIKGRKSADIENVLGYEYGAVAMHRDDMIILS.

K9 is a binding site for ATP. Residues S49, D136, and N148 each coordinate substrate. ATP is bound by residues 168 to 169 (TD) and 210 to 216 (TGGMMTK). In terms of domain architecture, PUA spans 275–353 (AGIITIDNGA…ADIENVLGYE (79 aa)).

Belongs to the glutamate 5-kinase family.

It localises to the cytoplasm. It catalyses the reaction L-glutamate + ATP = L-glutamyl 5-phosphate + ADP. Its pathway is amino-acid biosynthesis; L-proline biosynthesis; L-glutamate 5-semialdehyde from L-glutamate: step 1/2. Functionally, catalyzes the transfer of a phosphate group to glutamate to form L-glutamate 5-phosphate. This Haemophilus influenzae (strain PittGG) protein is Glutamate 5-kinase.